Consider the following 334-residue polypeptide: Holliday junction branch migration complex subunit RuvB (334 aa).

The large ATPase domain (RuvB-L) stretch occupies residues 1–181 (MSEFLTPERT…GIILELDFYT (181 aa)). Leu19 and Arg20 together coordinate ADP. 3 residues coordinate ATP: Glu26, Phe27, and Ile28. Residues Phe27, Ile28, Gly61, Leu62, Gly63, Lys64, Thr65, and Thr66 each coordinate ADP. ATP-binding residues include Leu62 and Gly63. Residues 127–129 (EDF) and Arg170 contribute to the ATP site. Tyr180, Pro216, and Arg217 together coordinate ADP. A small ATPAse domain (RuvB-S) region spans residues 182-255 (VKELKEIIKR…TMEVLNIDDE (74 aa)). Pro216 is a binding site for ATP. The head domain (RuvB-H) stretch occupies residues 256 to 334 (GLDEFDRKIL…KYEVPENRLF (79 aa)). Positions 309 and 314 each coordinate DNA.

Belongs to the RuvB family. As to quaternary structure, homohexamer. Forms an RuvA(8)-RuvB(12)-Holliday junction (HJ) complex. HJ DNA is sandwiched between 2 RuvA tetramers; dsDNA enters through RuvA and exits via RuvB. An RuvB hexamer assembles on each DNA strand where it exits the tetramer. Each RuvB hexamer is contacted by two RuvA subunits (via domain III) on 2 adjacent RuvB subunits; this complex drives branch migration. In the full resolvosome a probable DNA-RuvA(4)-RuvB(12)-RuvC(2) complex forms which resolves the HJ.

It is found in the cytoplasm. It carries out the reaction ATP + H2O = ADP + phosphate + H(+). Its function is as follows. The RuvA-RuvB-RuvC complex processes Holliday junction (HJ) DNA during genetic recombination and DNA repair, while the RuvA-RuvB complex plays an important role in the rescue of blocked DNA replication forks via replication fork reversal (RFR). RuvA specifically binds to HJ cruciform DNA, conferring on it an open structure. The RuvB hexamer acts as an ATP-dependent pump, pulling dsDNA into and through the RuvAB complex. RuvB forms 2 homohexamers on either side of HJ DNA bound by 1 or 2 RuvA tetramers; 4 subunits per hexamer contact DNA at a time. Coordinated motions by a converter formed by DNA-disengaged RuvB subunits stimulates ATP hydrolysis and nucleotide exchange. Immobilization of the converter enables RuvB to convert the ATP-contained energy into a lever motion, pulling 2 nucleotides of DNA out of the RuvA tetramer per ATP hydrolyzed, thus driving DNA branch migration. The RuvB motors rotate together with the DNA substrate, which together with the progressing nucleotide cycle form the mechanistic basis for DNA recombination by continuous HJ branch migration. Branch migration allows RuvC to scan DNA until it finds its consensus sequence, where it cleaves and resolves cruciform DNA. In terms of biological role, promotes Holliday junction (HJ) branch migration in conjunction with RuvA. Subunits can be free, ADP- or ATP-bound; nucleotide binding changes during the reaction cycle. Has a DNA-dependent ATPase activity; dsDNA and supercoiled DNA but not ssDNA stimulate activity. The sequence is that of Holliday junction branch migration complex subunit RuvB from Thermotoga maritima (strain ATCC 43589 / DSM 3109 / JCM 10099 / NBRC 100826 / MSB8).